The chain runs to 134 residues: Profilin-2 (134 aa).

Cysteine 13 and cysteine 118 are disulfide-bonded. The Involved in PIP2 interaction signature appears at 84–100; it reads AVIRGKKGSGGITIKKT. A Phosphothreonine modification is found at threonine 114.

Belongs to the profilin family. As to quaternary structure, occurs in many kinds of cells as a complex with monomeric actin in a 1:1 ratio. Post-translationally, phosphorylated by MAP kinases.

The protein resides in the cytoplasm. Its subcellular location is the cytoskeleton. Functionally, binds to actin and affects the structure of the cytoskeleton. At high concentrations, profilin prevents the polymerization of actin, whereas it enhances it at low concentrations. The polypeptide is Profilin-2 (Olea europaea (Common olive)).